Reading from the N-terminus, the 462-residue chain is Chitinase-like mite allergen Der p 18.0101 (462 aa).

The N-terminal stretch at Met-1–Ala-25 is a signal peptide. In terms of domain architecture, GH18 spans Pro-29–Gly-378. A disulfide bridge links Cys-33 with Cys-58. N-linked (GlcNAc...) asparagine glycans are attached at residues Asn-338 and Asn-441. In terms of domain architecture, Chitin-binding type-2 spans Val-404–Cys-462. A disulfide bond links Cys-439 and Cys-453.

The protein belongs to the glycosyl hydrolase 18 family. Chitinase class II subfamily. As to expression, expressed in the peritrophic matrix of the midgut, and only very weakly in fecal pellets.

It is found in the secreted. Functionally, probably a non-catalytic chitinase-like protein, which binds to insoluble chitin and enhances the activity of the catalytic chitinases. Has weak chitin-binding activity. This chain is Chitinase-like mite allergen Der p 18.0101, found in Dermatophagoides pteronyssinus (European house dust mite).